Consider the following 130-residue polypeptide: MFKFVMICAVLGLAVANPPVPHSLGRSEDVHADVLSQSDDVRADGFDSSLHTSNGIEQAASGDAHGNIHGNFGWISPEGEHVEVKYVANENGYQPSGAWIPTPPPIPEAIARAVAWLESHPPAPEHPRHH.

The N-terminal stretch at Met1–Ala16 is a signal peptide. Residues Ala43–Pro104 enclose the Chitin-binding type R&amp;R domain.

Functionally, component of the larval cuticle. In Drosophila melanogaster (Fruit fly), this protein is Larval cuticle protein 1 (Lcp1).